The sequence spans 207 residues: Holliday junction branch migration complex subunit RuvA (207 aa).

Residues 1 to 64 (MIGRLRGNLL…EDAQLLYGFN (64 aa)) are domain I. Residues 65–143 (TKNERALFRE…GWGAGDLFTP (79 aa)) are domain II. Positions 144 to 158 (ATDAAPMDDGSEFIT) are flexible linker. Residues 159–207 (SPQSAVDEAVSALIALGYKPQQASKTVSQIAKPDMTSEVLIRESLKSMI) are domain III.

This sequence belongs to the RuvA family. In terms of assembly, homotetramer. Forms an RuvA(8)-RuvB(12)-Holliday junction (HJ) complex. HJ DNA is sandwiched between 2 RuvA tetramers; dsDNA enters through RuvA and exits via RuvB. An RuvB hexamer assembles on each DNA strand where it exits the tetramer. Each RuvB hexamer is contacted by two RuvA subunits (via domain III) on 2 adjacent RuvB subunits; this complex drives branch migration. In the full resolvosome a probable DNA-RuvA(4)-RuvB(12)-RuvC(2) complex forms which resolves the HJ.

The protein localises to the cytoplasm. Functionally, the RuvA-RuvB-RuvC complex processes Holliday junction (HJ) DNA during genetic recombination and DNA repair, while the RuvA-RuvB complex plays an important role in the rescue of blocked DNA replication forks via replication fork reversal (RFR). RuvA specifically binds to HJ cruciform DNA, conferring on it an open structure. The RuvB hexamer acts as an ATP-dependent pump, pulling dsDNA into and through the RuvAB complex. HJ branch migration allows RuvC to scan DNA until it finds its consensus sequence, where it cleaves and resolves the cruciform DNA. This is Holliday junction branch migration complex subunit RuvA from Aliivibrio fischeri (strain ATCC 700601 / ES114) (Vibrio fischeri).